Reading from the N-terminus, the 959-residue chain is Lon protease homolog, mitochondrial (959 aa).

The transit peptide at 1–67 (MAASTGYVRL…GPAIGGQWRG (67 aa)) directs the protein to the mitochondrion. Disordered regions lie at residues 77 to 102 (GAFSGGEDASEGGAEEGAGGAGGSAG) and 218 to 257 (RQLEVEPEEPEAENKHKPRRKSKRGKKEAEDELSARHPAE). Gly residues predominate over residues 91 to 102 (EEGAGGAGGSAG). One can recognise a Lon N-terminal domain in the interval 124 to 370 (LPLIAITRNP…KALSLLKKEF (247 aa)). Residues 233–243 (HKPRRKSKRGK) show a composition bias toward basic residues. Positions 244–256 (KEAEDELSARHPA) are enriched in basic and acidic residues. 523–530 (GPPGVGKT) contributes to the ATP binding site. A Lon proteolytic domain is found at 759–949 (VTPPGVVMGL…REIFDIAFPD (191 aa)). Residues S855 and K898 contribute to the active site.

Belongs to the peptidase S16 family. In terms of assembly, homohexamer. Organized in a ring with a central cavity. The ATP-binding and proteolytic domains (AP-domain) form a hexameric chamber, while the N-terminal domain is arranged as a trimer of dimers. DNA and RNA binding is stimulated by substrate and inhibited by ATP binding. Interacts with TWNK and mitochondrial DNA polymerase subunit POLG. In terms of tissue distribution, duodenum, heart, lung and liver, but not thymus.

The protein resides in the mitochondrion matrix. The catalysed reaction is Hydrolysis of proteins in presence of ATP.. With respect to regulation, peptidase activity is subject to substrate inhibition by ATP. Functionally, ATP-dependent serine protease that mediates the selective degradation of misfolded, unassembled or oxidatively damaged polypeptides as well as certain short-lived regulatory proteins in the mitochondrial matrix. Endogenous substrates include mitochondrial steroidogenic acute regulatory (StAR) protein, DELE1, helicase Twinkle (TWNK) and the large ribosomal subunit protein MRPL32/bL32m. MRPL32/bL32m is protected from degradation by LONP1 when it is bound to a nucleic acid (RNA), but TWNK is not. May also have a chaperone function in the assembly of inner membrane protein complexes. Participates in the regulation of mitochondrial gene expression and in the maintenance of the integrity of the mitochondrial genome. Binds to mitochondrial promoters and RNA in a single-stranded, site-specific, and strand-specific manner. May regulate mitochondrial DNA replication and/or gene expression using site-specific, single-stranded DNA binding to target the degradation of regulatory proteins binding to adjacent sites in mitochondrial promoters. The sequence is that of Lon protease homolog, mitochondrial from Homo sapiens (Human).